A 444-amino-acid chain; its full sequence is Acetyl-CoA--deacetylcephalosporin C acetyltransferase (444 aa).

The propeptide occupies 1–71 (MLPSAQVARL…PQIANRFEAS (71 aa)). In terms of domain architecture, AB hydrolase-1 spans 112–425 (VIVCHTLTSS…DTNEGHDFFV (314 aa)). Catalysis depends on residues Ser-208 and His-421.

The protein belongs to the AB hydrolase superfamily. MetX family. Heterodimer of chain I and chain II.

The enzyme catalyses deacetylcephalosporin C + acetyl-CoA = cephalosporin C + CoA. It functions in the pathway antibiotic biosynthesis; cephalosporin C biosynthesis. Its function is as follows. Catalyzes the conversion of deacetylcephalosporin C to cephalosporin C. This chain is Acetyl-CoA--deacetylcephalosporin C acetyltransferase (CEFG), found in Hapsidospora chrysogena (Acremonium chrysogenum).